A 918-amino-acid chain; its full sequence is Calcium-transporting ATPase type 2C member 1 (918 aa).

Residues Met1–Tyr75 lie on the Cytoplasmic side of the membrane. A helical membrane pass occupies residues Ile76–Leu96. The Extracellular segment spans residues Met97–His98. The helical transmembrane segment at Gln99–Val119 threads the bilayer. The Cytoplasmic portion of the chain corresponds to Gln120 to Lys267. Residues Gln268–Gly288 traverse the membrane as a helical segment. The Extracellular segment spans residues Lys289–Ala302. Residues Val303–Met323 traverse the membrane as a helical segment. Residues Arg324–Arg703 are Cytoplasmic-facing. Asp350 (4-aspartylphosphate intermediate) is an active-site residue. Residues Asp643 and Asp647 each coordinate Mg(2+). Residues Phe704 to Phe724 form a helical membrane-spanning segment. Over Pro725–Gln732 the chain is Extracellular. Residues Ile733 to Val753 form a helical membrane-spanning segment. At Asp754–Asn773 the chain is on the cytoplasmic side. The helical transmembrane segment at Leu774–Trp794 threads the bilayer. Residues Arg795–Met842 are Extracellular-facing. The helical transmembrane segment at Phe843 to Leu863 threads the bilayer. Topologically, residues Gln864–Ser873 are cytoplasmic. The helical transmembrane segment at Ile874–Ile894 threads the bilayer. The Extracellular segment spans residues Lys895–Val918.

This sequence belongs to the cation transport ATPase (P-type) (TC 3.A.3) family. Type IIA subfamily. In terms of assembly, monomer. Homodimer.

It is found in the golgi apparatus. The protein localises to the trans-Golgi network membrane. It localises to the golgi stack membrane. It carries out the reaction Ca(2+)(in) + ATP + H2O = Ca(2+)(out) + ADP + phosphate + H(+). The catalysed reaction is Mn(2+)(in) + ATP + H2O = Mn(2+)(out) + ADP + phosphate + H(+). Its function is as follows. ATP-driven pump that supplies the Golgi apparatus with Ca(2+) and Mn(2+) ions, both essential cofactors for processing and trafficking of newly synthesized proteins in the secretory pathway. Within a catalytic cycle, acquires Ca(2+) or Mn(2+) ions on the cytoplasmic side of the membrane and delivers them to the lumenal side. The transfer of ions across the membrane is coupled to ATP hydrolysis and is associated with a transient phosphorylation that shifts the pump conformation from inward-facing to outward-facing state. Plays a primary role in the maintenance of Ca(2+) homeostasis in the trans-Golgi compartment with a functional impact on Golgi and post-Golgi protein sorting as well as a structural impact on cisternae morphology. Responsible for loading the Golgi stores with Ca(2+) ions in keratinocytes, contributing to keratinocyte differentiation and epidermis integrity. Participates in Ca(2+) and Mn(2+) ions uptake into the Golgi store of hippocampal neurons and regulates protein trafficking required for neural polarity. May also play a role in the maintenance of Ca(2+) and Mn(2+) homeostasis and signaling in the cytosol while preventing cytotoxicity. This is Calcium-transporting ATPase type 2C member 1 (ATP2C1) from Pongo abelii (Sumatran orangutan).